The chain runs to 282 residues: Protein GAM-1 (282 aa).

The BC-box-like signature appears at Ser251 to Val260.

As to quaternary structure, interacts with host HDAC1. Interacts with host E1-activating enzyme (SAE1/UBA2 heterodimer). Interacts with host retinoblastoma protein. Seems to form a complex with host E4F1 and HDAC1. Seems to form complexes with either CUL2-elongin BC complex-RBX1 or CUL5-elongin BC complex-RBX1. Interacts with TCEB1/Elongin-C, CUL2 and CUL5 in vitro.

It is found in the host nucleus. In terms of biological role, early protein essential for viral replication. Strong and global transcriptional activator of both viral and cellular genes. Activates transcription by blocking host retinoblastoma protein (RB) and inhibiting the SUMO pathway. Inhibition of host RB leads to the activation of E2F1-dependent transcription and, in particular, of E2F1-regulated S-phase genes. Stimulation of progression from G1 to S phase allows the virus to efficiently use the cellular DNA replicating machinery to achieve viral genome replication. Blocks the SUMO pathway by targeting the E1 enzyme (SAE1/UBA2 heterodimer) to the ubiquitin-proteasome machinery. Mediates SAE1 degradation possibly through the formation of complexes with either CUL2-elongin BC complex-RBX1 or CUL5-elongin BC complex-RBX1. The degradation of UBA2 is probably a consequent effect of SAE1 disappearance. Inhibits HDAC1 sumoylation, thereby interfering with histone deacetylation mediated by HDAC1, leading to activation of transcription. Mediates induction of heat-shock response. Seems to have an antiapoptotic function. This Galliformes (FAdV-1) protein is Protein GAM-1.